A 391-amino-acid chain; its full sequence is Protein NirF (391 aa).

It localises to the cytoplasm. In terms of biological role, required for the biosynthesis of heme d1 of nitrite reductase. Could have a dehydrogenase activity yielding sirohydrochlorin from precorrin-2 or dehydrogenation of propionate side chain C17. The sequence is that of Protein NirF (nirF) from Stutzerimonas stutzeri (Pseudomonas stutzeri).